The chain runs to 166 residues: PR-toxin biosynthesis cluster protein 10 (166 aa).

In terms of biological role, part of the gene cluster that mediates the biosynthesis of PR-toxin, a bicyclic sesquiterpene belonging to the eremophilane class and acting as a mycotoxin. The first step of the pathway is catalyzed by the aristolochene synthase which performs the cyclization of trans,trans-farnesyl diphosphate (FPP) to the bicyclic sesquiterpene aristolochene. Following the formation of aristolochene, the non-oxygenated aristolochene is converted to the trioxygenated intermediate eremofortin B, via 7-epi-neopetasone. This conversion appears to involve three enzymes, a hydroxysterol oxidase-like enzyme, the quinone-oxidase prx3 that forms the quinone-type-structure in the bicyclic nucleus of aristolochene with the C8-oxo group and the C-3 hydroxyl group, and the P450 monooxygenase prx9 that introduces the epoxide at the double bond between carbons 1 and 2. No monoxy or dioxy-intermediates have been reported to be released to the broth, so these three early oxidative reactions may be coupled together. Eremofortin B is further oxidized by another P450 monooxygenase, that introduces a second epoxide between carbons 7 and 11 prior to acetylation to eremofortin A by the acetyltransferase prx11. The second epoxidation may be performed by a second P450 monooxygenase. After the acetylation step, eremofortin A is converted to eremofortin C and then to PR-toxin. First the conversion of eremofortin A to eremofortin C proceeds by oxidation of the side chain of the molecule at C-12 and is catalyzed by the short-chain oxidoreductase prx1. The cytochrome P450 monooxygenase prx8 also plays a role in this step. The primary alcohol formed at C-12 is finally oxidized by the short-chain alcohol dehydrogenase prx4 that forms PR-toxin. This Penicillium rubens (strain ATCC 28089 / DSM 1075 / NRRL 1951 / Wisconsin 54-1255) (Penicillium chrysogenum) protein is PR-toxin biosynthesis cluster protein 10.